We begin with the raw amino-acid sequence, 319 residues long: Dehydrogenase/reductase SDR family member 9 (319 aa).

Residues 1–17 form the signal peptide; that stretch reads MLFWVLGLLILCGFLWT. Residues 34–58 and Asp83 contribute to the NAD(+) site; that span reads ITGC…HVIA. Ser164 is a substrate binding site. The active-site Proton acceptor is the Tyr176. Residue Lys180 coordinates NAD(+).

This sequence belongs to the short-chain dehydrogenases/reductases (SDR) family. As to quaternary structure, homotetramer. As to expression, highly expressed in trachea and epidermis. Detected at lower levels in spinal cord, bone marrow, brain, tongue, esophagus, heart, colon, testis, placenta, lung, skeletal muscle and lymph node.

The protein localises to the microsome membrane. The protein resides in the endoplasmic reticulum membrane. The catalysed reaction is 3beta-hydroxy-5alpha-pregnane-20-one + NAD(+) = 5alpha-pregnane-3,20-dione + NADH + H(+). It catalyses the reaction 17beta-hydroxy-5alpha-androstan-3-one + NAD(+) = 5alpha-androstan-3,17-dione + NADH + H(+). The enzyme catalyses androsterone + NAD(+) = 5alpha-androstan-3,17-dione + NADH + H(+). It carries out the reaction 5alpha-androstane-3alpha,17beta-diol + NAD(+) = 17beta-hydroxy-5alpha-androstan-3-one + NADH + H(+). The catalysed reaction is all-trans-retinol + NAD(+) = all-trans-retinal + NADH + H(+). It catalyses the reaction 3alpha-hydroxy-5alpha-pregnan-20-one + NAD(+) = 5alpha-pregnane-3,20-dione + NADH + H(+). In terms of biological role, 3-alpha-hydroxysteroid dehydrogenase that converts 3-alpha-tetrahydroprogesterone (allopregnanolone) to dihydroxyprogesterone and 3-alpha-androstanediol to dihydroxyprogesterone. Also plays a role in the biosynthesis of retinoic acid from retinaldehyde. Can utilize both NADH and NADPH. This is Dehydrogenase/reductase SDR family member 9 (DHRS9) from Homo sapiens (Human).